The following is a 453-amino-acid chain: Omega-3 fatty acid desaturase, chloroplastic (453 aa).

The Histidine box-1 motif lies at 171–175; sequence HDCGH. The Histidine box-2 signature appears at 207-211; it reads HRTHH. Positions 374-378 match the Histidine box-3 motif; it reads HVIHH.

It belongs to the fatty acid desaturase type 1 family.

The protein localises to the plastid. It localises to the chloroplast membrane. It functions in the pathway lipid metabolism; polyunsaturated fatty acid biosynthesis. Its function is as follows. Chloroplast omega-3 fatty acid desaturase introduces the third double bond in the biosynthesis of 16:3 and 18:3 fatty acids, important constituents of plant membranes. It is thought to use ferredoxin as an electron donor and to act on fatty acids esterified to galactolipids, sulfolipids and phosphatidylglycerol. This is Omega-3 fatty acid desaturase, chloroplastic (FAD7) from Glycine max (Soybean).